The sequence spans 444 residues: Tol-Pal system protein TolB (444 aa).

Residues 1–26 (MNLFRSLAPMGLALALLLPAAAPALA) form the signal peptide. Over residues 287–310 (ASGTRRQLTNSPSIETAPSYSPDG) the composition is skewed to polar residues. The interval 287–311 (ASGTRRQLTNSPSIETAPSYSPDGS) is disordered.

It belongs to the TolB family. In terms of assembly, the Tol-Pal system is composed of five core proteins: the inner membrane proteins TolA, TolQ and TolR, the periplasmic protein TolB and the outer membrane protein Pal. They form a network linking the inner and outer membranes and the peptidoglycan layer.

It localises to the periplasm. Part of the Tol-Pal system, which plays a role in outer membrane invagination during cell division and is important for maintaining outer membrane integrity. The protein is Tol-Pal system protein TolB of Cereibacter sphaeroides (strain ATCC 17025 / ATH 2.4.3) (Rhodobacter sphaeroides).